The chain runs to 146 residues: MEATRSDDPSLNPIRNRNPNPNPNPNPLSTIISSAQVWPTIDGPLGLTEEASVDYARRFYKFGFALLPWLWFVNCFYFWPVLRHSRAFPQIRNYVVRSAIGFSVFTALLSAWALTFSIGGEQLFGPLYDKLVMYNVADRLGLSGLA.

The segment at 1–26 (MEATRSDDPSLNPIRNRNPNPNPNPN) is disordered. Over 1–61 (MEATRSDDPS…SVDYARRFYK (61 aa)) the chain is Lumenal. The segment covering 9-19 (PSLNPIRNRNP) has biased composition (low complexity). A helical membrane pass occupies residues 62 to 82 (FGFALLPWLWFVNCFYFWPVL). Topologically, residues 83–98 (RHSRAFPQIRNYVVRS) are cytoplasmic. The chain crosses the membrane as a helical span at residues 99–119 (AIGFSVFTALLSAWALTFSIG). The Lumenal segment spans residues 120–146 (GEQLFGPLYDKLVMYNVADRLGLSGLA).

It belongs to the PEN-2 family. In terms of assembly, probable component of the gamma-secretase complex, a complex composed of a presenilin homodimer, nicastrin, APH1 and PEN2.

It localises to the membrane. In terms of biological role, probable subunit of the gamma-secretase complex, an endoprotease complex that catalyzes the intramembrane cleavage of integral membrane proteins such as Notch receptors. In Arabidopsis thaliana (Mouse-ear cress), this protein is Probable gamma-secretase subunit PEN-2.